The sequence spans 129 residues: Small ribosomal subunit protein uS8 (129 aa).

Belongs to the universal ribosomal protein uS8 family. As to quaternary structure, part of the 30S ribosomal subunit.

Its function is as follows. One of the primary rRNA binding proteins, it binds directly to 16S rRNA central domain where it helps coordinate assembly of the platform of the 30S subunit. The sequence is that of Small ribosomal subunit protein uS8 from Picrophilus torridus (strain ATCC 700027 / DSM 9790 / JCM 10055 / NBRC 100828 / KAW 2/3).